The chain runs to 339 residues: Leucine-rich repeat-containing protein 75A (339 aa).

A disordered region spans residues 1–25 (MGTRQTKGSLAERASPGAAPGPRRE). The span at 11-21 (AERASPGAAPG) shows a compositional bias: low complexity. LRR repeat units follow at residues 203 to 216 (VDSV…LTDD) and 228 to 241 (LPRL…GNRL). Residues 294–339 (LPTILELGEGPGTGEEAREGTDQQDPIGSPVTPARGQESTECVIQT) are disordered. A Phosphoserine modification is found at serine 322. A Phosphothreonine modification is found at threonine 325. The segment covering 330–339 (QESTECVIQT) has biased composition (polar residues).

Belongs to the LRRC75 family.

The sequence is that of Leucine-rich repeat-containing protein 75A (Lrrc75a) from Mus musculus (Mouse).